Consider the following 288-residue polypeptide: Bifunctional protein FolD (288 aa).

Residues 171–173, S196, and T237 each bind NADP(+); that span reads GRS.

It belongs to the tetrahydrofolate dehydrogenase/cyclohydrolase family. Homodimer.

It carries out the reaction (6R)-5,10-methylene-5,6,7,8-tetrahydrofolate + NADP(+) = (6R)-5,10-methenyltetrahydrofolate + NADPH. It catalyses the reaction (6R)-5,10-methenyltetrahydrofolate + H2O = (6R)-10-formyltetrahydrofolate + H(+). Its pathway is one-carbon metabolism; tetrahydrofolate interconversion. Functionally, catalyzes the oxidation of 5,10-methylenetetrahydrofolate to 5,10-methenyltetrahydrofolate and then the hydrolysis of 5,10-methenyltetrahydrofolate to 10-formyltetrahydrofolate. This is Bifunctional protein FolD from Elusimicrobium minutum (strain Pei191).